The sequence spans 492 residues: Virion host shutoff protein (492 aa).

Disordered regions lie at residues 110-130 (EEASDVDASPPPSPITDSRPS), 288-307 (SQARRAARRERANSRSLESM), and 334-371 (EDDYEEDPPLQPPDVAGGPRDGARSSSSEILTPPELVQ).

This sequence belongs to the herpesviridae VHS protein family. As to quaternary structure, interacts with human EIF4H, EIF4A1 and EIF4A2; interaction with eIF4AI and EIF4A2 presumably allows Vhs protein to associate with the eIF4F cap-binding complex.

It is found in the virion. Minor structural protein that acts as an endoribonuclease during lytic infection. Degrades host mRNAs in the cytoplasm by cutting them at preferred sites, including some in regions of translation initiation. Together with inhibition of host splicing by ICP27, contributes to an overall decrease in host protein synthesis. Also, after the onset of viral transcription, accelerates the turnover of viral mRNA, thereby facilitating the sequential expression of different classes of viral genes. Binds translation initiation factors eIF4H, eIF4AI, and eIF4AII, thereby may interact directly with the translation initiation complex and thus digest specifically mRNAs. Also impedes antigen presentation by major histocompatibility complex class I and class II molecules, inhibits secretion of cytokines that would otherwise recruit lymphocytes and neutrophils cells to the site of infection and blocks the activation of dendritic cells. Impedes the alpha/beta interferon-mediated response to infection. Inhibits the integrated stress response (ISR) in the infected cell, this function requires the endonuclease activity. Stress granule formation is thus inhibited, which allows protein synthesis and viral replication. The polypeptide is Virion host shutoff protein (UL41) (Homo sapiens (Human)).